A 429-amino-acid polypeptide reads, in one-letter code: Serine--tRNA ligase (429 aa).

Position 235–237 (235–237) interacts with L-serine; sequence TAE. ATP is bound at residue 266-268; that stretch reads RSE. Position 289 (glutamate 289) interacts with L-serine. 353 to 356 lines the ATP pocket; that stretch reads EISS. Serine 389 lines the L-serine pocket.

This sequence belongs to the class-II aminoacyl-tRNA synthetase family. Type-1 seryl-tRNA synthetase subfamily. In terms of assembly, homodimer. The tRNA molecule binds across the dimer.

It is found in the cytoplasm. It carries out the reaction tRNA(Ser) + L-serine + ATP = L-seryl-tRNA(Ser) + AMP + diphosphate + H(+). The catalysed reaction is tRNA(Sec) + L-serine + ATP = L-seryl-tRNA(Sec) + AMP + diphosphate + H(+). The protein operates within aminoacyl-tRNA biosynthesis; selenocysteinyl-tRNA(Sec) biosynthesis; L-seryl-tRNA(Sec) from L-serine and tRNA(Sec): step 1/1. Its function is as follows. Catalyzes the attachment of serine to tRNA(Ser). Is also able to aminoacylate tRNA(Sec) with serine, to form the misacylated tRNA L-seryl-tRNA(Sec), which will be further converted into selenocysteinyl-tRNA(Sec). In Histophilus somni (strain 129Pt) (Haemophilus somnus), this protein is Serine--tRNA ligase.